The following is an 87-amino-acid chain: Small ribosomal subunit protein bS20 (87 aa).

The segment at 1 to 22 (MANSAQARKRARQAVKQRAHNA) is disordered. Over residues 7-19 (ARKRARQAVKQRA) the composition is skewed to basic residues.

Belongs to the bacterial ribosomal protein bS20 family.

Functionally, binds directly to 16S ribosomal RNA. In Methylobacillus flagellatus (strain ATCC 51484 / DSM 6875 / VKM B-1610 / KT), this protein is Small ribosomal subunit protein bS20.